The sequence spans 75 residues: Gas vesicle protein S (75 aa).

This sequence belongs to the gas vesicle GvpA family.

The protein resides in the gas vesicle. In terms of biological role, probably a minor component of the gas vesicle. Gas vesicles are hollow, gas filled proteinaceous nanostructures found in some microorganisms. It is not clear what function gas vesicles perform in soil bacteria. In Streptomyces sp. (strain CB03234), this protein is Gas vesicle protein S.